A 420-amino-acid polypeptide reads, in one-letter code: MSSETVSYFSHPFPRRQSVGVSVGGVIVGGSAPVVVQSMTNTDTADVDSTVAQVVALHRAGSEIVRITVDRDESAAAVPKIRERLERLGHDVPLVGDFHYIGHKLLADHPACAEALAKYRINPGNVGFKDKKDKQFADIVEMAIRYDKPVRIGVNWGSLDQELLTTLMDRNQAEGAPLSAQDVMREAIVQSALISANLAEEIGLGRDKIILSAKVSQVQDLIAVYTMLAQRSNHALHLGLTEAGMGTKGIVASSAAMGILLQQGIGDTIRISLTPEPGGDRTREVQVAQELLQTMGFRQFVPIVAACPGCGRTTSTVFQELAQTIQEDIRRNMPLWREKYPGVEALSVAVMGCIVNGPGESKHADIGISLPGTGETPSAPVFVDGKKVATLRGPGIAEDFQKMVADYIENRFGLGRKIAS.

[4Fe-4S] cluster contacts are provided by Cys307, Cys310, Cys353, and Glu360.

Belongs to the IspG family. [4Fe-4S] cluster is required as a cofactor.

It catalyses the reaction (2E)-4-hydroxy-3-methylbut-2-enyl diphosphate + oxidized [flavodoxin] + H2O + 2 H(+) = 2-C-methyl-D-erythritol 2,4-cyclic diphosphate + reduced [flavodoxin]. It functions in the pathway isoprenoid biosynthesis; isopentenyl diphosphate biosynthesis via DXP pathway; isopentenyl diphosphate from 1-deoxy-D-xylulose 5-phosphate: step 5/6. Its function is as follows. Converts 2C-methyl-D-erythritol 2,4-cyclodiphosphate (ME-2,4cPP) into 1-hydroxy-2-methyl-2-(E)-butenyl 4-diphosphate. This is 4-hydroxy-3-methylbut-2-en-1-yl diphosphate synthase (flavodoxin) from Brucella suis (strain ATCC 23445 / NCTC 10510).